The following is a 558-amino-acid chain: Glucose-6-phosphate isomerase (558 aa).

Position 2 is an N-acetylalanine (Ala-2). Lys-12 carries the N6-acetyllysine modification. N6-(2-hydroxyisobutyryl)lysine is present on Lys-34. Phosphoserine is present on Ser-107. Position 109 is a phosphothreonine (Thr-109). Lys-142 is modified (N6-acetyllysine). 159 to 160 (GS) provides a ligand contact to D-glucose 6-phosphate. Ser-185 is subject to Phosphoserine; by CK2. 210–215 (SKTFTT) is a binding site for D-glucose 6-phosphate. The residue at position 250 (Thr-250) is a Phosphothreonine. D-glucose 6-phosphate-binding residues include Gln-354, Glu-358, and His-389. Residue Glu-358 is the Proton donor of the active site. His-389 is a catalytic residue. Lys-454 carries the post-translational modification N6-acetyllysine; alternate. Position 454 is an N6-malonyllysine; alternate (Lys-454). Lys-454 is subject to N6-succinyllysine; alternate. Ser-455 is subject to Phosphoserine. Residue Lys-519 coordinates D-glucose 6-phosphate. Lys-519 is a catalytic residue.

This sequence belongs to the GPI family. As to quaternary structure, homodimer; in the catalytically active form. Monomer in the secreted form. Phosphorylation at Ser-185 by CK2 has been shown to decrease enzymatic activity and may contribute to secretion by a non-classical secretory pathway. Post-translationally, ISGylated.

It localises to the cytoplasm. Its subcellular location is the secreted. The catalysed reaction is alpha-D-glucose 6-phosphate = beta-D-fructose 6-phosphate. It functions in the pathway carbohydrate degradation; glycolysis; D-glyceraldehyde 3-phosphate and glycerone phosphate from D-glucose: step 2/4. Functionally, in the cytoplasm, catalyzes the conversion of glucose-6-phosphate to fructose-6-phosphate, the second step in glycolysis, and the reverse reaction during gluconeogenesis. Besides it's role as a glycolytic enzyme, also acts as a secreted cytokine: acts as an angiogenic factor (AMF) that stimulates endothelial cell motility. Acts as a neurotrophic factor, neuroleukin, for spinal and sensory neurons. It is secreted by lectin-stimulated T-cells and induces immunoglobulin secretion. In Pongo abelii (Sumatran orangutan), this protein is Glucose-6-phosphate isomerase.